We begin with the raw amino-acid sequence, 648 residues long: Fidgetin-like protein 2 (648 aa).

The tract at residues 1–36 (MHWTPEHAQPLNQWPEQHLDVSSTTPSPAHKLELPP) is disordered. Residues 10–27 (PLNQWPEQHLDVSSTTPS) show a composition bias toward polar residues. Residues Ala-394 and 434–439 (GCGKAL) contribute to the ATP site.

This sequence belongs to the AAA ATPase family. The cofactor is Mg(2+).

The protein localises to the cytoplasm. It is found in the cell cortex. The catalysed reaction is ATP + H2O = ADP + phosphate + H(+). Functionally, microtubule-severing enzyme that negatively regulates cell migration and wound healing. In migrating cells, targets dynamic microtubules (MTs) at the leading edge and severs them, thereby suppressing motility. Microtubule severing releases ARHGEF2 which activates RHOA, which in turn regulates focal ahesion turnover via focal adhesion kinase, as opposed to F-actin polymerization, to suppress cell motility. Negative regulator of axon regeneration that suppresses axonal growth by selectively severing dynamic MTs in the distal axon shaft and growth cone. Contributes to proper cell branching during endothelial and neuronal development. In Rattus norvegicus (Rat), this protein is Fidgetin-like protein 2 (Fignl2).